Consider the following 688-residue polypeptide: Potassium-transporting ATPase ATP-binding subunit (688 aa).

The next 4 membrane-spanning stretches (helical) occupy residues 35 to 55 (VMMV…VQFA), 62 to 82 (AVFS…ANLA), 219 to 239 (IALS…VVTL), and 260 to 280 (VLVA…LSAI). Asp-313 acts as the 4-aspartylphosphate intermediate in catalysis. Residues Asp-350, Glu-354, 383 to 390 (FSAQTRMS), and Lys-401 each bind ATP. Mg(2+) contacts are provided by Asp-524 and Asp-528. The next 3 membrane-spanning stretches (helical) occupy residues 594-614 (FAIL…LNLM), 622-642 (AILS…PLAL), and 668-688 (VVLP…MGWI).

It belongs to the cation transport ATPase (P-type) (TC 3.A.3) family. Type IA subfamily. In terms of assembly, the system is composed of three essential subunits: KdpA, KdpB and KdpC.

It localises to the cell inner membrane. It catalyses the reaction K(+)(out) + ATP + H2O = K(+)(in) + ADP + phosphate + H(+). In terms of biological role, part of the high-affinity ATP-driven potassium transport (or Kdp) system, which catalyzes the hydrolysis of ATP coupled with the electrogenic transport of potassium into the cytoplasm. This subunit is responsible for energy coupling to the transport system and for the release of the potassium ions to the cytoplasm. In Tolumonas auensis (strain DSM 9187 / NBRC 110442 / TA 4), this protein is Potassium-transporting ATPase ATP-binding subunit.